Reading from the N-terminus, the 228-residue chain is Claudin-10 (228 aa).

A helical transmembrane segment spans residues 1–21 (MASTASEIIAFMVSISGWVLV). Residues 22 to 80 (SSTLPTDYWKVSTIDGTVITTATYWANLWKACVTDSTGVSNCKDFPSMLALDGYIQACR) are Extracellular-facing. A helical membrane pass occupies residues 81-101 (GLMIAAVSLGFFGSIFALFGM). At 102-115 (KCTKVGGSDKAKAK) the chain is on the cytoplasmic side. A helical transmembrane segment spans residues 116–136 (IACLAGIVFILSGLCSMTGCS). Topologically, residues 137-160 (LYANKITTEFFDPLFVEQKYELGA) are extracellular. Residues 161–181 (ALFIGWAGASLCIIGGVIFCF) form a helical membrane-spanning segment. Over 182 to 228 (SISDNNKTPRYAYNGATSVMSSRTKYHGGEDFKTTNPSKQFDKNAYV) the chain is Cytoplasmic.

This sequence belongs to the claudin family. Can form homodimers both in trans (interaction between CLDN10 molecules in opposing membranes) and in cis (interaction between CLDN10 molecules within one membrane). Interacts with CLDN19.

The protein resides in the cell junction. Its subcellular location is the tight junction. It localises to the cell membrane. It carries out the reaction Na(+)(in) = Na(+)(out). It catalyses the reaction Li(+)(in) = Li(+)(out). The enzyme catalyses K(+)(in) = K(+)(out). The catalysed reaction is Rb(+)(in) = Rb(+)(out). It carries out the reaction Cs(+)(in) = Cs(+)(out). It catalyses the reaction NH4(+)(in) = NH4(+)(out). The enzyme catalyses methylamine(out) = methylamine(in). The catalysed reaction is Mg(2+)(in) = Mg(2+)(out). It carries out the reaction Ca(2+)(in) = Ca(2+)(out). It catalyses the reaction Sr(2+)(in) = Sr(2+)(out). The enzyme catalyses chloride(in) = chloride(out). The catalysed reaction is nitrate(in) = nitrate(out). In terms of biological role, forms paracellular channels: polymerizes in tight junction strands with cation- and anion-selective channels through the strands, conveying epithelial permeability in a process known as paracellular tight junction permeability. In sweat glands and in the thick ascending limb (TAL) of Henle's loop in kidney, it controls paracellular sodium permeability which is essential for proper sweat production and renal function. In renal proximal tubules, it conveys selective chloride over hydrogencarbonate anion permeability which is required for renal chloride reabsorption and salt homeostasis. The polypeptide is Claudin-10 (CLDN10) (Pongo abelii (Sumatran orangutan)).